A 121-amino-acid polypeptide reads, in one-letter code: Large ribosomal subunit protein uL18 (121 aa).

Belongs to the universal ribosomal protein uL18 family. In terms of assembly, part of the 50S ribosomal subunit; part of the 5S rRNA/L5/L18/L25 subcomplex. Contacts the 5S and 23S rRNAs.

Its function is as follows. This is one of the proteins that bind and probably mediate the attachment of the 5S RNA into the large ribosomal subunit, where it forms part of the central protuberance. This chain is Large ribosomal subunit protein uL18, found in Bdellovibrio bacteriovorus (strain ATCC 15356 / DSM 50701 / NCIMB 9529 / HD100).